A 332-amino-acid polypeptide reads, in one-letter code: L-lactate dehydrogenase C chain (332 aa).

Serine 2 bears the Blocked amino end (Ser) mark. NAD(+) contacts are provided by residues 29-57 (GNVGMACAISILLKGLADELALVDADTNK) and arginine 99. The substrate site is built by arginine 106, asparagine 138, and arginine 169. An NAD(+)-binding site is contributed by asparagine 138. Histidine 193 functions as the Proton acceptor in the catalytic mechanism. Threonine 248 lines the substrate pocket.

It belongs to the LDH/MDH superfamily. LDH family. Homotetramer. Interacts with RABL2/RABL2A; binds preferentially to GTP-bound RABL2. In terms of tissue distribution, expressed within the midpiece of sperm tail (at protein level).

The protein localises to the cytoplasm. It carries out the reaction (S)-lactate + NAD(+) = pyruvate + NADH + H(+). Its pathway is fermentation; pyruvate fermentation to lactate; (S)-lactate from pyruvate: step 1/1. Possible role in sperm motility. The protein is L-lactate dehydrogenase C chain (Ldhc) of Mus musculus (Mouse).